The chain runs to 1090 residues: Pullulanase (1090 aa).

An N-terminal signal peptide occupies residues 1 to 19 (MLRYTRNALVLGSLVLLSG). Cysteine 20 carries N-palmitoyl cysteine lipidation. Residue cysteine 20 is the site of S-diacylglycerol cysteine attachment. Catalysis depends on aspartate 684, which acts as the Nucleophile. Glutamate 713 acts as the Proton donor in catalysis.

The protein belongs to the glycosyl hydrolase 13 family. Homotrimer.

The protein localises to the cell membrane. It catalyses the reaction Hydrolysis of (1-&gt;6)-alpha-D-glucosidic linkages in pullulan, amylopectin and glycogen, and in the alpha- and beta-limit dextrins of amylopectin and glycogen.. The chain is Pullulanase (pulA) from Klebsiella pneumoniae.